A 489-amino-acid chain; its full sequence is Probable transporter MCH1 (489 aa).

12 consecutive transmembrane segments (helical) span residues 34 to 54 (ISLI…FTPV), 68 to 88 (IIGS…GYLA), 94 to 114 (VLLS…AATV), 124 to 144 (LAIS…TALL), 156 to 175 (LTIS…GSRV), 196 to 216 (FSFL…VVSI), 262 to 282 (ISTY…EMYI), 302 to 324 (VAIH…DFLV), 335 to 355 (LLSI…STFV), 359 to 379 (YYII…LYPT), 403 to 423 (IGST…CGVF), and 463 to 483 (SLII…ILRI).

It belongs to the major facilitator superfamily.

The protein localises to the vacuole membrane. Its function is as follows. Probable transporter. This is Probable transporter MCH1 (MCH1) from Wickerhamomyces anomalus (Yeast).